The chain runs to 2321 residues: Neurogenic locus notch homolog protein 3 (2321 aa).

The span at 1-14 (MGPGARGRRRRRRP) shows a compositional bias: basic residues. Residues 1 to 26 (MGPGARGRRRRRRPMSPPPPPPPVRA) form a disordered region. An N-terminal signal peptide occupies residues 1–39 (MGPGARGRRRRRRPMSPPPPPPPVRALPLLLLLAGPGAA). Residues 15 to 25 (MSPPPPPPPVR) show a composition bias toward pro residues. EGF-like domains follow at residues 40–77 (APPC…ERCQ), 78–118 (LEDP…PDCS), and 119–156 (LPDP…RSCR). Residues 40–1643 (APPCLDGSPC…LEPPEPSVPL (1604 aa)) are Extracellular-facing. 99 disulfide bridges follow: Cys-43–Cys-55, Cys-49–Cys-65, Cys-67–Cys-76, Cys-82–Cys-93, Cys-87–Cys-106, Cys-108–Cys-117, Cys-123–Cys-134, Cys-128–Cys-144, Cys-146–Cys-155, Cys-162–Cys-174, Cys-168–Cys-183, Cys-185–Cys-194, Cys-201–Cys-212, Cys-206–Cys-222, Cys-224–Cys-233, Cys-240–Cys-251, Cys-245–Cys-260, Cys-262–Cys-271, Cys-278–Cys-291, Cys-285–Cys-300, Cys-302–Cys-311, Cys-318–Cys-329, Cys-323–Cys-338, Cys-340–Cys-349, Cys-355–Cys-366, Cys-360–Cys-377, Cys-379–Cys-388, Cys-395–Cys-408, Cys-402–Cys-417, Cys-419–Cys-428, Cys-435–Cys-446, Cys-440–Cys-455, Cys-457–Cys-466, Cys-473–Cys-484, Cys-478–Cys-493, Cys-495–Cys-504, Cys-511–Cys-522, Cys-516–Cys-531, Cys-533–Cys-542, Cys-549–Cys-559, Cys-554–Cys-568, Cys-570–Cys-579, Cys-586–Cys-597, Cys-591–Cys-606, Cys-608–Cys-617, Cys-624–Cys-634, Cys-629–Cys-643, Cys-645–Cys-654, Cys-661–Cys-672, Cys-666–Cys-681, Cys-683–Cys-692, Cys-699–Cys-709, Cys-704–Cys-718, Cys-720–Cys-729, Cys-738–Cys-749, Cys-743–Cys-758, Cys-760–Cys-769, Cys-775–Cys-786, Cys-780–Cys-796, Cys-798–Cys-807, Cys-814–Cys-826, Cys-820–Cys-835, Cys-837–Cys-846, Cys-853–Cys-864, Cys-858–Cys-873, Cys-875–Cys-884, Cys-891–Cys-901, Cys-896–Cys-910, Cys-912–Cys-921, Cys-928–Cys-939, Cys-933–Cys-948, Cys-950–Cys-959, Cys-966–Cys-977, Cys-971–Cys-986, Cys-988–Cys-997, Cys-1004–Cys-1015, Cys-1009–Cys-1022, Cys-1024–Cys-1033, Cys-1040–Cys-1061, Cys-1055–Cys-1070, Cys-1072–Cys-1081, Cys-1088–Cys-1099, Cys-1093–Cys-1108, Cys-1110–Cys-1119, Cys-1126–Cys-1137, Cys-1131–Cys-1146, Cys-1148–Cys-1157, Cys-1164–Cys-1182, Cys-1176–Cys-1191, Cys-1193–Cys-1202, Cys-1209–Cys-1222, Cys-1214–Cys-1232, Cys-1234–Cys-1243, Cys-1250–Cys-1261, Cys-1255–Cys-1275, Cys-1277–Cys-1286, Cys-1293–Cys-1304, Cys-1298–Cys-1313, and Cys-1315–Cys-1324. The 38-residue stretch at 158-195 (DVDECRVGEPCRHGGTCLNTPGSFRCQCPAGYTGPLCE) folds into the EGF-like 4; calcium-binding domain. The region spanning 197–234 (PAVPCAPSPCRNGGTCRQSGDLTYDCACLPGFEGQNCE) is the EGF-like 5 domain. One can recognise an EGF-like 6; calcium-binding domain in the interval 236 to 272 (NVDDCPGHRCLNGGTCVDGVNTYNCQCPPEWTGQFCT). One can recognise an EGF-like 7 domain in the interval 274–312 (DVDECQLQPNACHNGGTCFNTLGGHSCVCVNGWTGESCS). Residues 314–350 (NIDDCATAVCFHGATCHDRVASFYCACPMGKTGLLCH) enclose the EGF-like 8; calcium-binding domain. In terms of domain architecture, EGF-like 9 spans 351 to 389 (LDDACVSNPCHEDAICDTNPVNGRAICTCPPGFTGGACD). Residues 391 to 429 (DVDECSIGANPCEHLGRCVNTQGSFLCQCGRGYTGPRCE) form the EGF-like 10; calcium-binding domain. Residues 431–467 (DVNECLSGPCRNQATCLDRIGQFTCICMAGFTGTYCE) form the EGF-like 11; calcium-binding domain. Residues 469 to 505 (DIDECQSSPCVNGGVCKDRVNGFSCTCPSGFSGSTCQ) form the EGF-like 12; calcium-binding domain. The 37-residue stretch at 507–543 (DVDECASTPCRNGAKCVDQPDGYECRCAEGFEGTLCD) folds into the EGF-like 13; calcium-binding domain. The EGF-like 14; calcium-binding domain maps to 545–580 (NVDDCSPDPCHHGRCVDGIASFSCACAPGYTGTRCE). The EGF-like 15; calcium-binding domain occupies 582–618 (QVDECRSQPCRHGGKCLDLVDKYLCRCPSGTTGVNCE). The region spanning 620–655 (NIDDCASNPCTFGVCRDGINRYDCVCQPGFTGPLCN) is the EGF-like 16; calcium-binding domain. The EGF-like 17; calcium-binding domain maps to 657 to 693 (EINECASSPCGEGGSCVDGENGFRCLCPPGSLPPLCL). 3 EGF-like domains span residues 695–730 (PSHP…PRCS), 734–770 (ARDA…RQCE), and 771–808 (LLSP…PRCQ). The region spanning 810–847 (DVDECAGPAPCGPHGICTNLAGSFSCTCHGGYTGPSCD) is the EGF-like 21; calcium-binding domain. Residues 849–885 (DINDCDPNPCLNGGSCQDGVGSFSCSCLPGFAGPRCA) form the EGF-like 22; calcium-binding domain. Residues 887–922 (DVDECLSNPCGPGTCTDHVASFTCTCPPGYGGFHCE) enclose the EGF-like 23; calcium-binding domain. 5 EGF-like domains span residues 924-960 (DLPD…AHCQ), 962-998 (EADP…PQCQ), 1000-1034 (LVDW…RLCD), 1036-1082 (RSLP…SHCE), and 1084-1120 (EVDP…DNCE). Residues 1122-1158 (DVDECASQPCQHGGSCIDLVARYLCSCPPGTLGVLCE) form the EGF-like 29; calcium-binding domain. The EGF-like 30; calcium-binding domain occupies 1160 to 1203 (NEDDCGPGPPLDSGPRCLHNGTCVDLVGGFRCTCPPGYTGLRCE). Asn-1179 carries N-linked (GlcNAc...) asparagine glycosylation. EGF-like domains lie at 1205–1244 (DINE…PRCQ), 1246–1287 (VLSP…PRCE), 1289–1325 (VARS…PSCR), and 1335–1373 (SNAS…PRCE). N-linked (GlcNAc...) asparagine glycosylation occurs at Asn-1336. Intrachain disulfides connect Cys-1339-Cys-1350, Cys-1344-Cys-1361, Cys-1363-Cys-1372, Cys-1387-Cys-1410, Cys-1392-Cys-1405, Cys-1401-Cys-1417, Cys-1428-Cys-1451, Cys-1433-Cys-1446, Cys-1442-Cys-1458, Cys-1467-Cys-1493, Cys-1475-Cys-1488, and Cys-1484-Cys-1500. LNR repeat units follow at residues 1387–1427 (CPRA…PWRQ), 1428–1458 (CEAL…NFDC), and 1467–1505 (CNPV…SEVP). Asn-1438 carries N-linked (GlcNAc...) asparagine glycosylation. The helical transmembrane segment at 1644–1664 (LPLLVAGAVLLLVILVLGVMV) threads the bilayer. Over 1665 to 2321 (ARRKREHSTL…EVTPKRQVLA (657 aa)) the chain is Cytoplasmic. ANK repeat units lie at residues 1838-1867 (TGET…DTNA), 1871-1901 (SGRT…DLDA), 1905-1934 (DGST…DVNA), 1938-1967 (LGKS…NKDM), and 1971-2000 (KEET…NREI). The disordered stretch occupies residues 2024 to 2120 (LDQPSGPRSP…FGGPPASPGG (97 aa)). Residues 2039–2053 (LGPLLCPPGAFLPGL) show a composition bias toward low complexity. Arg-2174 carries the post-translational modification Omega-N-methylarginine. Residues 2190–2321 (APGPQLLNPG…EVTPKRQVLA (132 aa)) are disordered. Positions 2269-2289 (STPSPATATGAMATTTGALPA) are enriched in low complexity. Polar residues predominate over residues 2296–2308 (VPSSLAQAQTQLG).

It belongs to the NOTCH family. Heterodimer of a C-terminal fragment N(TM) and a N-terminal fragment N(EC) which are probably linked by disulfide bonds. Interacts with MAML1, MAML2 and MAML3 which act as transcriptional coactivators for NOTCH3. Interacts with PSMA1. Interacts with HIF1AN. Post-translationally, synthesized in the endoplasmic reticulum as an inactive form which is proteolytically cleaved by a furin-like convertase in the trans-Golgi network before it reaches the plasma membrane to yield an active, ligand-accessible form. Cleavage results in a C-terminal fragment N(TM) and a N-terminal fragment N(EC). Following ligand binding, it is cleaved by TNF-alpha converting enzyme (TACE) to yield a membrane-associated intermediate fragment called notch extracellular truncation (NEXT). This fragment is then cleaved by presenilin dependent gamma-secretase to release a notch-derived peptide containing the intracellular domain (NICD) from the membrane. In terms of processing, phosphorylated. Hydroxylated by HIF1AN. As to expression, ubiquitously expressed in fetal and adult tissues.

It localises to the cell membrane. The protein resides in the nucleus. Functionally, functions as a receptor for membrane-bound ligands Jagged1, Jagged2 and Delta1 to regulate cell-fate determination. Upon ligand activation through the released notch intracellular domain (NICD) it forms a transcriptional activator complex with RBPJ/RBPSUH and activates genes of the enhancer of split locus. Affects the implementation of differentiation, proliferation and apoptotic programs. In Homo sapiens (Human), this protein is Neurogenic locus notch homolog protein 3 (NOTCH3).